A 138-amino-acid chain; its full sequence is ATP synthase epsilon chain (138 aa).

It belongs to the ATPase epsilon chain family. In terms of assembly, F-type ATPases have 2 components, CF(1) - the catalytic core - and CF(0) - the membrane proton channel. CF(1) has five subunits: alpha(3), beta(3), gamma(1), delta(1), epsilon(1). CF(0) has three main subunits: a, b and c.

The protein resides in the cell inner membrane. Produces ATP from ADP in the presence of a proton gradient across the membrane. This Trichlorobacter lovleyi (strain ATCC BAA-1151 / DSM 17278 / SZ) (Geobacter lovleyi) protein is ATP synthase epsilon chain.